We begin with the raw amino-acid sequence, 631 residues long: Chaperone protein HtpG (631 aa).

The segment at 1 to 339 (MSAQKETLGF…SNDLPLNVSR (339 aa)) is a; substrate-binding. Positions 340–556 (EILQESKDID…EHDMSAHLER (217 aa)) are b. Positions 557-631 (MLKAAGQKIE…INKLMLELSV (75 aa)) are c.

Belongs to the heat shock protein 90 family. As to quaternary structure, homodimer.

The protein localises to the cytoplasm. Its function is as follows. Molecular chaperone. Has ATPase activity. This is Chaperone protein HtpG from Chromobacterium violaceum (strain ATCC 12472 / DSM 30191 / JCM 1249 / CCUG 213 / NBRC 12614 / NCIMB 9131 / NCTC 9757 / MK).